Reading from the N-terminus, the 68-residue chain is Dermaseptin-H5 (68 aa).

An N-terminal signal peptide occupies residues 1–17 (KSLFLVLFLGMVSLSIC). Residues 18–38 (EEEKRENEDEEKQEDDEQSEM) constitute a propeptide that is removed on maturation. Residues 19–40 (EEKRENEDEEKQEDDEQSEMKR) are disordered. Residues 25–35 (EDEEKQEDDEQ) show a composition bias toward acidic residues. Leu65 bears the Leucine amide mark. Positions 67 to 68 (EQ) are excised as a propeptide.

As to expression, expressed by the skin glands.

The protein resides in the secreted. Functionally, has antibacterial activity against the Gram-negative bacteria E.coli ATCC 11775 (MIC=0.5 uM), and the Gram-positive bacteria S.aureus ATCC 12600 (MIC=0.5 uM) and M.luteus ATCC 49732 (MIC=2.0 uM). Does not inhibit the growth of the fungus C.albicans. Probably acts by disturbing membrane functions with its amphipathic structure. The polypeptide is Dermaseptin-H5 (Pithecopus azureus (Orange-legged monkey tree frog)).